The primary structure comprises 377 residues: cAMP-dependent protein kinase type II regulatory subunit (377 aa).

Over residues 48-69 (ERPSVSHTDQSTDDQLSVNSQD) the composition is skewed to polar residues. A disordered region spans residues 48–78 (ERPSVSHTDQSTDDQLSVNSQDADAEPPVMA). Phosphoserine occurs at positions 51, 58, 64, 67, and 84. Residues 81–85 (RRKSV) carry the Pseudophosphorylation motif motif. The residue at position 90 (tyrosine 90) is a Phosphotyrosine. 3',5'-cyclic AMP is bound by residues 124–239 (LFRS…LLNS), glutamate 189, arginine 198, 242–362 (MLKA…YESQ), glutamate 311, and arginine 320.

The protein belongs to the cAMP-dependent kinase regulatory chain family. In terms of assembly, tetramer, composed of 2 regulatory (R) and 2 catalytic (C) subunits. In the presence of cAMP it dissociates into 2 active monomeric C subunits and an R dimer. Interacts with Akap200. In terms of processing, the pseudophosphorylation site binds to the substrate-binding region of the catalytic chain but is not phosphorylated. The physiological significance of phosphorylations by other kinases is unclear. Detected in follicle cells, germline-derived cells, germline line stem cells and outer rim of ring canals of nurse cells throughout oogenesis (at protein level).

The protein resides in the cytoplasm. The protein localises to the cell membrane. In terms of biological role, regulatory subunit of the cAMP-dependent protein kinases involved in cAMP signaling in cells. Mediates membrane association by binding to anchoring proteins, such as Akap200. Might play an essential role in the regulation of neuronal activity in the brain. In Drosophila melanogaster (Fruit fly), this protein is cAMP-dependent protein kinase type II regulatory subunit (Pka-R2).